Here is a 475-residue protein sequence, read N- to C-terminus: Methyltransferase-like protein 25B (475 aa).

The stretch at Q186 to N210 forms a coiled coil. The chain crosses the membrane as a helical span at residues V406 to L426.

It belongs to the METTL25 family.

It is found in the membrane. This Bos taurus (Bovine) protein is Methyltransferase-like protein 25B.